The sequence spans 494 residues: Catalase A (494 aa).

Residues 1 to 23 (MTDRPTITTTAGAPVPDNQNSLT) show a composition bias toward polar residues. The interval 1–25 (MTDRPTITTTAGAPVPDNQNSLTAG) is disordered. Catalysis depends on residues His55 and Asn127. A heme-binding site is contributed by Tyr337.

Belongs to the catalase family. The cofactor is heme.

It is found in the periplasm. It carries out the reaction 2 H2O2 = O2 + 2 H2O. Its function is as follows. Decomposes hydrogen peroxide into water and oxygen; serves to protect cells from the toxic effects of hydrogen peroxide. In Rhizobium meliloti (strain 1021) (Ensifer meliloti), this protein is Catalase A (katA).